Here is a 242-residue protein sequence, read N- to C-terminus: ATP synthase subunit a, chloroplastic (242 aa).

The next 5 helical transmembrane spans lie at 34–54, 93–113, 132–152, 188–210, and 222–242; these read GQVL…AVLG, VPFI…GAII, INTT…AGLS, LFGN…PLVI, and GSVQ…EALE.

The protein belongs to the ATPase A chain family. F-type ATPases have 2 components, CF(1) - the catalytic core - and CF(0) - the membrane proton channel. CF(1) has five subunits: alpha(3), beta(3), gamma(1), delta(1), epsilon(1). CF(0) has four main subunits: a, b, b' and c.

Its subcellular location is the plastid. It is found in the chloroplast thylakoid membrane. Key component of the proton channel; it plays a direct role in the translocation of protons across the membrane. This Trieres chinensis (Marine centric diatom) protein is ATP synthase subunit a, chloroplastic.